A 490-amino-acid chain; its full sequence is Proline--tRNA ligase (490 aa).

The protein belongs to the class-II aminoacyl-tRNA synthetase family. ProS type 3 subfamily. As to quaternary structure, homodimer.

It localises to the cytoplasm. The catalysed reaction is tRNA(Pro) + L-proline + ATP = L-prolyl-tRNA(Pro) + AMP + diphosphate. Catalyzes the attachment of proline to tRNA(Pro) in a two-step reaction: proline is first activated by ATP to form Pro-AMP and then transferred to the acceptor end of tRNA(Pro). The chain is Proline--tRNA ligase from Salinibacter ruber (strain DSM 13855 / M31).